The following is a 252-amino-acid chain: Centromere protein V (252 aa).

A disordered region spans residues 1–80 (MRRTRSAVAT…EEPPPAVTPA (80 aa)). Ser18 bears the Phosphoserine mark. Omega-N-methylarginine is present on Arg39. Over residues 54–64 (SAKPRPKPPPR) the composition is skewed to pro residues. Thr78 is subject to Phosphothreonine. Positions 125-237 (HTGGCHCGAV…TEEFNGSDWE (113 aa)) constitute a CENP-V/GFA domain. Residues Cys129, Cys131, Cys149, Cys151, Cys154, Cys193, and Cys196 each coordinate Zn(2+). Ser234 carries the phosphoserine modification.

The protein belongs to the Gfa family. It depends on Zn(2+) as a cofactor.

Its subcellular location is the chromosome. The protein resides in the centromere. It is found in the kinetochore. The protein localises to the nucleus. It localises to the cytoplasm. Its subcellular location is the cytoskeleton. The protein resides in the spindle. Its function is as follows. Required for distribution of pericentromeric heterochromatin in interphase nuclei and for centromere formation and organization, chromosome alignment and cytokinesis. The chain is Centromere protein V (Cenpv) from Mus musculus (Mouse).